The primary structure comprises 145 residues: Large ribosomal subunit protein uL13 (145 aa).

This sequence belongs to the universal ribosomal protein uL13 family. In terms of assembly, part of the 50S ribosomal subunit.

This protein is one of the early assembly proteins of the 50S ribosomal subunit, although it is not seen to bind rRNA by itself. It is important during the early stages of 50S assembly. This chain is Large ribosomal subunit protein uL13, found in Listeria innocua serovar 6a (strain ATCC BAA-680 / CLIP 11262).